A 199-amino-acid polypeptide reads, in one-letter code: Prolactin (199 aa).

Cys-4 and Cys-11 are joined by a disulfide. 3 positions are modified to phosphoserine: Ser-26, Ser-34, and Ser-90. 2 disulfide bridges follow: Cys-58-Cys-174 and Cys-191-Cys-199.

It belongs to the somatotropin/prolactin family. Interacts with PRLR.

It is found in the secreted. In terms of biological role, prolactin acts primarily on the mammary gland by promoting lactation. The chain is Prolactin (PRL) from Loxodonta africana (African elephant).